A 506-amino-acid chain; its full sequence is ATP synthase subunit alpha (506 aa).

An ATP-binding site is contributed by 170-177; it reads GDRQTGKT.

Belongs to the ATPase alpha/beta chains family. As to quaternary structure, F-type ATPases have 2 components, CF(1) - the catalytic core - and CF(0) - the membrane proton channel. CF(1) has five subunits: alpha(3), beta(3), gamma(1), delta(1), epsilon(1). CF(0) has four main subunits: a(1), b(1), b'(1) and c(9-12).

Its subcellular location is the cellular thylakoid membrane. The enzyme catalyses ATP + H2O + 4 H(+)(in) = ADP + phosphate + 5 H(+)(out). Functionally, produces ATP from ADP in the presence of a proton gradient across the membrane. The alpha chain is a regulatory subunit. The sequence is that of ATP synthase subunit alpha from Synechococcus sp. (strain JA-2-3B'a(2-13)) (Cyanobacteria bacterium Yellowstone B-Prime).